The following is a 487-amino-acid chain: UDP-N-acetylmuramoyl-L-alanyl-D-glutamate--2,6-diaminopimelate ligase (487 aa).

Residues Leu-23 and Ser-25 each coordinate UDP-N-acetyl-alpha-D-muramoyl-L-alanyl-D-glutamate. Gly-108–Ser-114 is an ATP binding site. UDP-N-acetyl-alpha-D-muramoyl-L-alanyl-D-glutamate contacts are provided by residues Thr-150–Thr-151, Ser-177, Gln-183, and Arg-185. An N6-carboxylysine modification is found at Lys-217. Residues Arg-378, Asp-402 to Arg-405, Gly-453, and Glu-457 each bind meso-2,6-diaminopimelate. Positions Asp-402–Arg-405 match the Meso-diaminopimelate recognition motif motif.

It belongs to the MurCDEF family. MurE subfamily. The cofactor is Mg(2+). Carboxylation is probably crucial for Mg(2+) binding and, consequently, for the gamma-phosphate positioning of ATP.

It is found in the cytoplasm. It carries out the reaction UDP-N-acetyl-alpha-D-muramoyl-L-alanyl-D-glutamate + meso-2,6-diaminopimelate + ATP = UDP-N-acetyl-alpha-D-muramoyl-L-alanyl-gamma-D-glutamyl-meso-2,6-diaminopimelate + ADP + phosphate + H(+). It functions in the pathway cell wall biogenesis; peptidoglycan biosynthesis. Catalyzes the addition of meso-diaminopimelic acid to the nucleotide precursor UDP-N-acetylmuramoyl-L-alanyl-D-glutamate (UMAG) in the biosynthesis of bacterial cell-wall peptidoglycan. The sequence is that of UDP-N-acetylmuramoyl-L-alanyl-D-glutamate--2,6-diaminopimelate ligase from Pseudomonas aeruginosa (strain ATCC 15692 / DSM 22644 / CIP 104116 / JCM 14847 / LMG 12228 / 1C / PRS 101 / PAO1).